A 734-amino-acid polypeptide reads, in one-letter code: Tripartite terminase subunit 3 (734 aa).

Residues 183 to 189 carry the Nuclear localization signal motif; the sequence is PKKRAKV. Positions 258–265 match the Walker A motif motif; the sequence is VPRRHGKT. The Walker B motif signature appears at 352-357; that stretch reads LLFVDE. The active-site For ATPase activity is the Glu-357. Residues Asp-509, Glu-581, and Asp-706 each act as for nuclease activity in the active site.

Belongs to the herpesviridae TRM3 protein family. In terms of assembly, interacts with the terminase subunits TRM1 and TRM2. Interacts with portal protein.

Its subcellular location is the host nucleus. Functionally, component of the molecular motor that translocates viral genomic DNA in empty capsid during DNA packaging. Forms a tripartite terminase complex together with TRM1 and TRM2 in the host cytoplasm. Once the complex reaches the host nucleus, it interacts with the capsid portal vertex. This portal forms a ring in which genomic DNA is translocated into the capsid. TRM3 carries an RNase H-like nuclease activity that plays an important role for the cleavage of concatemeric viral DNA into unit length genomes. The polypeptide is Tripartite terminase subunit 3 (Human herpesvirus 2 (strain HG52) (HHV-2)).